A 196-amino-acid polypeptide reads, in one-letter code: MSNIKLIVGLANPGAEYAQTRHNAGAWYVDLLARSHNQSLKEESKFFGYTARINICGHDVRLLVPTTFMNLSGKSVVALASFYRIQPDEILVAHDELDLPPGVAKMKLGGSHGGHNGLKDIQNKFGNNPNFYRLRIGIGHPGDKNKVVGFVLGKPPASEQQLIDDAIDEARRCTDILMKQDMDKAINRLHSFKASV.

Residue Tyr-17 coordinates tRNA. Catalysis depends on His-22, which acts as the Proton acceptor. TRNA contacts are provided by Phe-68, Asn-70, and Asn-116.

It belongs to the PTH family. As to quaternary structure, monomer.

It localises to the cytoplasm. It carries out the reaction an N-acyl-L-alpha-aminoacyl-tRNA + H2O = an N-acyl-L-amino acid + a tRNA + H(+). Its function is as follows. Hydrolyzes ribosome-free peptidyl-tRNAs (with 1 or more amino acids incorporated), which drop off the ribosome during protein synthesis, or as a result of ribosome stalling. Functionally, catalyzes the release of premature peptidyl moieties from peptidyl-tRNA molecules trapped in stalled 50S ribosomal subunits, and thus maintains levels of free tRNAs and 50S ribosomes. The sequence is that of Peptidyl-tRNA hydrolase from Photorhabdus laumondii subsp. laumondii (strain DSM 15139 / CIP 105565 / TT01) (Photorhabdus luminescens subsp. laumondii).